A 322-amino-acid polypeptide reads, in one-letter code: MEQPMKPTVIITGASSGVGLYGAKALIDKGWHVIMACRNLDKTQKVADELGFPKDSYTIIKLDLGYLDSVRRFVAQFRELGRPLKALVCNAAVYFPLLDEPLWSADDYELSVATNHLGHFLLCNLLLEDLKACPDADKRLIILGTVTANSKELGGKIPIPAPPDLGNFEGFEAGFKKPIAMINNKKFKSGKAYKDSKLCNMLTTRELHRRFHQETGIVFNSLYPGCVADTPLFRNHYSLFRTIFPWFQKNVTKGYVSQELAGERVAMVVADDKFKDSGVHWSWGNRQQAGREAFVQELSEQGSDAQKAQRMWDLSEKLVGLV.

This sequence belongs to the short-chain dehydrogenases/reductases (SDR) family. POR subfamily.

The catalysed reaction is chlorophyllide a + NADP(+) = protochlorophyllide a + NADPH + H(+). Its pathway is porphyrin-containing compound metabolism; chlorophyll biosynthesis. Phototransformation of protochlorophyllide (Pchlide) to chlorophyllide (Chlide). In Synechocystis sp. (strain ATCC 27184 / PCC 6803 / Kazusa), this protein is Light-dependent protochlorophyllide reductase (por).